Here is a 160-residue protein sequence, read N- to C-terminus: Cyclic pyranopterin monophosphate synthase (160 aa).

Residues 74–76 (LSH) and 112–113 (ME) each bind substrate. Asp127 is an active-site residue.

This sequence belongs to the MoaC family. Homohexamer; trimer of dimers.

It carries out the reaction (8S)-3',8-cyclo-7,8-dihydroguanosine 5'-triphosphate = cyclic pyranopterin phosphate + diphosphate. It participates in cofactor biosynthesis; molybdopterin biosynthesis. Functionally, catalyzes the conversion of (8S)-3',8-cyclo-7,8-dihydroguanosine 5'-triphosphate to cyclic pyranopterin monophosphate (cPMP). The sequence is that of Cyclic pyranopterin monophosphate synthase from Pelobacter propionicus (strain DSM 2379 / NBRC 103807 / OttBd1).